We begin with the raw amino-acid sequence, 153 residues long: Cornifin-B (153 aa).

Disordered stretches follow at residues 1–35 (MSSH…PCVS) and 49–85 (CHPK…HPKA). 14 consecutive repeat copies span residues 27–34 (PPPPEPCV), 35–42 (SQVKTPCD), 43–50 (TKVPEPCH), 51–58 (PKAPEPCH), 59–66 (PKAPEPCH), 67–74 (PKAPEPCH), 75–82 (PKAPEPCH), 83–90 (PKAPEPCH), 91–98 (PKAPEPCH), 99–106 (PKAPEPCH), 107–114 (PKAPEPCH), 115–122 (PKVPEPCL), 123–130 (PKAPEPCQ), and 131–138 (PIVPEPCP). The 14 X 8 AA approximate tandem repeats stretch occupies residues 27-138 (PPPPEPCVSQ…CQPIVPEPCP (112 aa)).

Belongs to the cornifin (SPRR) family. In terms of tissue distribution, expressed in fetal periderm, hair follicles and in the thickened epidermis of the lip and footpad. Also present in the epithelia of various tissues such as the penis, vagina, forestomach, tongue and esophagus.

Its subcellular location is the cytoplasm. Cross-linked envelope protein of keratinocytes. It is a keratinocyte protein that first appears in the cell cytosol, but ultimately becomes cross-linked to membrane proteins by transglutaminase. All that results in the formation of an insoluble envelope beneath the plasma membrane. The chain is Cornifin-B (Sprr1b) from Mus musculus (Mouse).